We begin with the raw amino-acid sequence, 144 residues long: Maximins 4/H3 type 1 (144 aa).

Residues 1–18 (MNFKYIIAVSFFIASAYA) form the signal peptide. Positions 19-43 (RSEEKDVQSLSQRDVLEEESLREIR) are excised as a propeptide. Position 70 is an asparagine amide (asparagine 70). Positions 74 to 123 (TAEDHEVMKRLEAVMRDLDSLDHPEEASERETRGFNQEEIANLFTKKEKR) are excised as a propeptide. Isoleucine 143 is subject to Isoleucine amide.

Belongs to the bombinin family. In terms of tissue distribution, expressed by the skin glands.

The protein resides in the secreted. Functionally, maximin-4 shows antibacterial activity against both Gram-positive and Gram-negative bacteria. It also shows antimicrobial activity against the fungus C.albicans, but not against A.flavus nor P.uticale. It has little hemolytic activity. It does not possess a significant cytotoxicity against tumor cell lines. It does not possess a significant anti-HIV activity. Maximin-H3 shows antibacterial activity against both Gram-positive and Gram-negative bacteria. It also shows antimicrobial activity against the fungus C.albicans. Shows strong hemolytic activity. The sequence is that of Maximins 4/H3 type 1 from Bombina maxima (Giant fire-bellied toad).